Here is a 305-residue protein sequence, read N- to C-terminus: Protein hrde-2 (305 aa).

Disordered stretches follow at residues 211 to 233 (AEMV…PVPA) and 267 to 305 (EMSN…EYCQ). The segment covering 215–227 (PSNTTGSSGSPMS) has biased composition (polar residues). Over residues 268–287 (MSNDEYSPDESENDENEYDY) the composition is skewed to acidic residues. The span at 289–305 (NAARYDDGYDEGHEYCQ) shows a compositional bias: basic and acidic residues.

In terms of tissue distribution, expressed throughout the male and female germline.

The protein localises to the nucleus. Functionally, plays a role in germline RNA interference (RNAi), and in particular is required for piwi-interacting RNA (piRNA) gene silencing. Facilitates the binding of the argonaut protein hrde-1 to small interfering RNAs (siRNAs) targets that are required for transgenerational epigenetic inheritance and germline immortality. This is Protein hrde-2 from Caenorhabditis elegans.